We begin with the raw amino-acid sequence, 119 residues long: Ribosome-binding factor A (119 aa).

Belongs to the RbfA family. In terms of assembly, monomer. Binds 30S ribosomal subunits, but not 50S ribosomal subunits or 70S ribosomes.

It is found in the cytoplasm. Its function is as follows. One of several proteins that assist in the late maturation steps of the functional core of the 30S ribosomal subunit. Associates with free 30S ribosomal subunits (but not with 30S subunits that are part of 70S ribosomes or polysomes). Required for efficient processing of 16S rRNA. May interact with the 5'-terminal helix region of 16S rRNA. This Wolinella succinogenes (strain ATCC 29543 / DSM 1740 / CCUG 13145 / JCM 31913 / LMG 7466 / NCTC 11488 / FDC 602W) (Vibrio succinogenes) protein is Ribosome-binding factor A.